A 1167-amino-acid polypeptide reads, in one-letter code: PH and Rap-GAP domain-containing protein DDB_G0271806 (1167 aa).

PH domains lie at 35 to 140 (NCVK…SSSL) and 165 to 257 (HVYL…SRIP). The tract at residues 95-160 (GIDNNNCTNS…TNANTNNGLS (66 aa)) is disordered. Residues 98 to 155 (NNNCTNSNSNNNNNNSDLIHLSAPSLSSSTSSTISPISSSSSLTTTTTTTTTTTNANT) show a composition bias toward low complexity. Disordered stretches follow at residues 335-361 (SGGG…GGSL), 376-400 (WRFS…STQV), and 645-734 (YSRS…LEPE). The span at 340–351 (NNSSPSSLQSQQ) shows a compositional bias: low complexity. Over residues 648-676 (SEPNLQSCLSSSPSTRETMVPSSPSSHQL) the composition is skewed to polar residues. The span at 687–732 (EQQLSSSSSSSSQQLQLQLQQQEQEQLLQEQPEAEQSQPEPQPQLE) shows a compositional bias: low complexity. Residues 950–1162 (LLSFEERQTT…RTRESLLNYY (213 aa)) enclose the Rap-GAP domain.

The polypeptide is PH and Rap-GAP domain-containing protein DDB_G0271806 (Dictyostelium discoideum (Social amoeba)).